The following is a 239-amino-acid chain: uncharacterized protein (239 aa).

A disordered region spans residues 104 to 127; the sequence is LPATSQSSQPKSTNSSTESSSIGQ. Residues 107–127 show a composition bias toward low complexity; that stretch reads TSQSSQPKSTNSSTESSSIGQ. The stretch at 134 to 202 forms a coiled coil; the sequence is ENEINLNKNK…HFIQNNQESF (69 aa). A helical membrane pass occupies residues 211–231; that stretch reads VKIGSAFIIYIFYNVLFFIIV.

Its subcellular location is the membrane. This is an uncharacterized protein from Dictyostelium discoideum (Social amoeba).